Consider the following 314-residue polypeptide: 2,3-dihydroxyphenylpropionate/2,3-dihydroxicinnamic acid 1,2-dioxygenase 2 (314 aa).

H115 acts as the Proton donor in catalysis. H179 functions as the Proton acceptor in the catalytic mechanism.

It belongs to the LigB/MhpB extradiol dioxygenase family. As to quaternary structure, homotetramer. It depends on Fe(2+) as a cofactor.

The catalysed reaction is 3-(2,3-dihydroxyphenyl)propanoate + O2 = (2Z,4E)-2-hydroxy-6-oxonona-2,4-dienedioate + H(+). It carries out the reaction (2E)-3-(2,3-dihydroxyphenyl)prop-2-enoate + O2 = (2Z,4E,7E)-2-hydroxy-6-oxonona-2,4,7-trienedioate + H(+). It participates in aromatic compound metabolism; 3-phenylpropanoate degradation. In terms of biological role, catalyzes the non-heme iron(II)-dependent oxidative cleavage of 2,3-dihydroxyphenylpropionic acid and 2,3-dihydroxicinnamic acid into 2-hydroxy-6-ketononadienedioate and 2-hydroxy-6-ketononatrienedioate, respectively. This Pseudomonas putida (Arthrobacter siderocapsulatus) protein is 2,3-dihydroxyphenylpropionate/2,3-dihydroxicinnamic acid 1,2-dioxygenase 2 (mhpB2).